We begin with the raw amino-acid sequence, 832 residues long: Alpha-glucan phosphorylase, H isozyme (832 aa).

Position 678 is an N6-(pyridoxal phosphate)lysine (K678).

It belongs to the glycogen phosphorylase family. Requires pyridoxal 5'-phosphate as cofactor.

The protein resides in the cytoplasm. The catalysed reaction is [(1-&gt;4)-alpha-D-glucosyl](n) + phosphate = [(1-&gt;4)-alpha-D-glucosyl](n-1) + alpha-D-glucose 1-phosphate. In terms of biological role, phosphorylase is an important allosteric enzyme in carbohydrate metabolism. Enzymes from different sources differ in their regulatory mechanisms and in their natural substrates. However, all known phosphorylases share catalytic and structural properties. This chain is Alpha-glucan phosphorylase, H isozyme, found in Triticum aestivum (Wheat).